Here is a 248-residue protein sequence, read N- to C-terminus: Pulmonary surfactant-associated protein A (248 aa).

An N-terminal signal peptide occupies residues 1-20 (MLLCSLTLTLILLAVSGTKC). Residues 31–100 (GVPGIPGSPG…PGERGPPGPP (70 aa)) form the Collagen-like domain. Positions 34–105 (GIPGSPGLPG…PPGPPAYPDE (72 aa)) are disordered. The segment covering 54-65 (PGPPGPIGPPGG) has biased composition (pro residues). The segment covering 84–93 (ERGDKGEPGE) has biased composition (basic and acidic residues). Positions 134 to 247 (VGEKVFSTNG…CLQYRLAICE (114 aa)) constitute a C-type lectin domain. Cystine bridges form between Cys155-Cys246 and Cys224-Cys238. The N-linked (GlcNAc...) asparagine glycan is linked to Asn207. Ca(2+) is bound by residues Glu215, Arg217, Asn234, and Asp235.

This sequence belongs to the SFTPA family. In terms of assembly, oligomeric complex of 6 set of homotrimers.

The protein resides in the secreted. It localises to the extracellular space. It is found in the extracellular matrix. The protein localises to the surface film. In terms of biological role, in presence of calcium ions, it binds to surfactant phospholipids and contributes to lower the surface tension at the air-liquid interface in the alveoli of the mammalian lung and is essential for normal respiration. Enhances the expression of MYO18A/SP-R210 on alveolar macrophages. This is Pulmonary surfactant-associated protein A (SFTPA1) from Equus caballus (Horse).